The sequence spans 108 residues: UPF0235 protein APE_0182.1 (108 aa).

It belongs to the UPF0235 family.

The sequence is that of UPF0235 protein APE_0182.1 from Aeropyrum pernix (strain ATCC 700893 / DSM 11879 / JCM 9820 / NBRC 100138 / K1).